Consider the following 475-residue polypeptide: MSVITRFAPSPTGFLHIGSARTALFNWLYAKHTGGKMLLRIEDTDRERSTETALKAIIDGLHWMGLSYDGDPISQFERAERHRQVAKQLVKDGKAYYCYASPEELAEMRENARAEGRPPRYDGRWRDRDISEAPKGVKPVIRIKAPQDGETVLHDRVQGDVRFPNKDLDDFIILRSDGSPTYMHAVVVDDHDMGVTHIIRGDDHLTNAARQTIIFNALGWDIPVMAHIPLIHGENGAKLSKRHGALGVDAYRIMGYLPAALRNYLVRLGWSHGDDELMSIESMIFWFDIDDINKSAARFDLKKLDAINGHYIRMNNDQDLFDAVLNILPEIEGGLEIIERLDEQRRAQFLAAIPNLKERSKTLRELIDNASFIFTKRPLLLDEKAQILLDKNGQAILNGLYLALKACLSWDAKTLDETLRVYAQKQDLKFGDVAQPLRAALTGRVTSPGVFDVLVLLGRDEALNRITDQLVTTAC.

The 'HIGH' region motif lies at 9–19; the sequence is PSPTGFLHIGS. The short motif at 238–242 is the 'KMSKS' region element; the sequence is KLSKR. K241 provides a ligand contact to ATP.

The protein belongs to the class-I aminoacyl-tRNA synthetase family. Glutamate--tRNA ligase type 1 subfamily. In terms of assembly, monomer.

Its subcellular location is the cytoplasm. It carries out the reaction tRNA(Glu) + L-glutamate + ATP = L-glutamyl-tRNA(Glu) + AMP + diphosphate. Catalyzes the attachment of glutamate to tRNA(Glu) in a two-step reaction: glutamate is first activated by ATP to form Glu-AMP and then transferred to the acceptor end of tRNA(Glu). The sequence is that of Glutamate--tRNA ligase 2 from Bartonella quintana (strain Toulouse) (Rochalimaea quintana).